We begin with the raw amino-acid sequence, 428 residues long: Histidine--tRNA ligase (428 aa).

This sequence belongs to the class-II aminoacyl-tRNA synthetase family. Homodimer.

Its subcellular location is the cytoplasm. The catalysed reaction is tRNA(His) + L-histidine + ATP = L-histidyl-tRNA(His) + AMP + diphosphate + H(+). The chain is Histidine--tRNA ligase from Bordetella avium (strain 197N).